Consider the following 233-residue polypeptide: Eukaryotic translation initiation factor 4E-1 (233 aa).

The segment at 1–51 (MVVEDALKTSASEDQAKTETNPKPREEDDEPEEGEIVGDEESASKPSKGIA) is disordered. Over residues 14-26 (DQAKTETNPKPRE) the composition is skewed to basic and acidic residues. Residues 27 to 41 (EDDEPEEGEIVGDEE) are compositionally biased toward acidic residues. 2 EIF4G-binding regions span residues 55–58 (HALE) and 65–104 (FDSP…NNIR). MRNA is bound by residues 76 to 81 (KQEDWG), Lys-108, and 126 to 127 (WE). A disulfide bridge connects residues Cys-131 and Cys-169. Positions 152 to 161 (YTLLGMIGEQ) are EIF4G-binding. MRNA is bound by residues 176 to 181 (RNRQEK) and 221 to 225 (MRHER).

This sequence belongs to the eukaryotic initiation factor 4E family. In terms of assembly, EIF4F is a multi-subunit complex, the composition of which varies with external and internal environmental conditions. It is composed of at least EIF4A, EIF4E and EIF4G. EIF4E is also known to interact with other partners. In higher plants two isoforms of EIF4F have been identified, named isoform EIF4F and isoform EIF(iso)4F. Isoform EIF4F has subunits p220 and p26, whereas isoform EIF(iso)4F has subunits p82 and p28. (Microbial infection) Does not interact with the VPg of Plum pox virus (PPV) strain D. According to the redox status, the Cys-131-Cys-169 disulfide bridge may have a role in regulating protein function by affecting its ability to bind capped mRNA. Mostly expressed in leaves, flower buds, leaf buds and anthers, to a lower extent in roots, stems and green immature fruit, and, at low levels, in petals.

The protein resides in the nucleus. It is found in the cytoplasm. In terms of biological role, component of the protein complex eIF4F, which is involved in the recognition of the mRNA cap, ATP-dependent unwinding of 5'-terminal secondary structure and recruitment of mRNA to the ribosome. Recognizes and binds the 7-methylguanosine-containing mRNA cap during an early step in the initiation of protein synthesis and facilitates ribosome binding by inducing the unwinding of the mRNAs secondary structures. Its function is as follows. (Microbial infection) Not involved in the plum pox virus (PPV) strain D infection process. This is Eukaryotic translation initiation factor 4E-1 from Prunus domestica (Garden plum).